Reading from the N-terminus, the 1023-residue chain is Phosphoenolpyruvate carboxylase (1023 aa).

Catalysis depends on residues His199 and Lys669.

It belongs to the PEPCase type 1 family. Requires Mg(2+) as cofactor.

It catalyses the reaction oxaloacetate + phosphate = phosphoenolpyruvate + hydrogencarbonate. Forms oxaloacetate, a four-carbon dicarboxylic acid source for the tricarboxylic acid cycle. The sequence is that of Phosphoenolpyruvate carboxylase from Trichormus variabilis (strain ATCC 29413 / PCC 7937) (Anabaena variabilis).